The following is a 623-amino-acid chain: Isocitrate dehydrogenase kinase/phosphatase (623 aa).

ATP-binding positions include 344–350 and K365; that span reads APGIKGM. The active site involves D400.

The protein belongs to the AceK family.

The protein resides in the cytoplasm. It carries out the reaction L-seryl-[isocitrate dehydrogenase] + ATP = O-phospho-L-seryl-[isocitrate dehydrogenase] + ADP + H(+). In terms of biological role, bifunctional enzyme which can phosphorylate or dephosphorylate isocitrate dehydrogenase (IDH) on a specific serine residue. This is a regulatory mechanism which enables bacteria to bypass the Krebs cycle via the glyoxylate shunt in response to the source of carbon. When bacteria are grown on glucose, IDH is fully active and unphosphorylated, but when grown on acetate or ethanol, the activity of IDH declines drastically concomitant with its phosphorylation. The polypeptide is Isocitrate dehydrogenase kinase/phosphatase (Polaromonas naphthalenivorans (strain CJ2)).